Reading from the N-terminus, the 742-residue chain is MATKFPSFNQGLAQDPTTRRIWYGIATAHDFESHDGMTEEKLYQKLFSTHFGHLAIIALWVAGNLFHIAWQGNFEQFVLDPTHVRPIAHAIWDPHFGSGITEAMTQAGASGPVNIAYSGLYHWWYTIGMRTNEQLFQASIFMSILACWTLFAGWLHLQPKFRPSLAWFKNAESRLNHHLAVLFGFSSIAWTGHLVHVAIPESRGQHVGWDNWLTVLPHPAGLAPFFTLNWGAYAQNPDSLDQVFGTAEGAGTAIFTFLGGLHPQSEALWLTDIAHHHIAIGTVFVIAGHMYRNTFGIGHSLKEITEAHNTRHPNDPHKGSFGINHDGIYETVNNSLHFQLGLALASLGVATSLVAQHMGALPSYAFIARDYTTQSALYSHHQYIAMFLMVGAFAHGAIFFVRDYDPELNKDNVLARVLGTKEALISHLSWVTMLLGFHTLGIYVHNDVVVAFGNPEKQILIEPVFAQFVQAAQGKMMYGFNALLSDPTSSASLAANSLPGNHYWMDLINRQDALSAFLPIGPADFLVHHAIALGLHTTALILIKGALDARGTKLIPDKKDLGYAFPCDGPGRGGTCDSSSWDAMYLAMFWALNLLAWVTFYWHWKHLAIWQGNVAQFNESGTYLMGWFRDYLWLNSAQLINGYNPFGVNSLSPWAWMFLFGHLVWATGFMFLISWRGYWQELIETLVWAHQRTPIANLVGWRDKPVALSIVQARLVGLAHFTIGNILTFGAFVIASTSGKFG.

Helical transmembrane passes span 46–69, 135–158, 175–199, 273–291, 336–359, 375–401, 423–445, and 525–543; these read LFST…FHIA, LFQA…LHLQ, LNHH…HVAI, IAHH…GHMY, LHFQ…QHMG, SALY…IFFV, ALIS…IYVH, and FLVH…LILI. [4Fe-4S] cluster is bound by residues Cys567 and Cys576. A run of 2 helical transmembrane segments spans residues 583-604 and 651-673; these read AMYL…YWHW and LSPW…MFLI. Divinyl chlorophyll a is bound by residues His662, Met670, and Tyr678. Position 679 (Trp679) interacts with phylloquinone. The chain crosses the membrane as a helical span at residues 715–735; sequence LVGLAHFTIGNILTFGAFVIA.

The protein belongs to the PsaA/PsaB family. In terms of assembly, the PsaA/B heterodimer binds the P700 divinyl chlorophyll special pair and subsequent electron acceptors. PSI consists of a core antenna complex that captures photons, and an electron transfer chain that converts photonic excitation into a charge separation. The cyanobacterial PSI reaction center is composed of one copy each of PsaA,B,C,D,E,F,I,J,K,L,M and X, and forms trimeric complexes. PSI electron transfer chain: 5 divinyl chlorophyll a, 1 divinyl chlorophyll a', 2 phylloquinones and 3 4Fe-4S clusters. PSI core antenna: 90 divinyl chlorophyll a, 22 carotenoids, 3 phospholipids and 1 galactolipid. P700 is a divinyl chlorophyll a/divinyl chlorophyll a' dimer, A0 is one or more divinyl chlorophyll a, A1 is one or both phylloquinones and FX is a shared 4Fe-4S iron-sulfur center. serves as cofactor.

The protein resides in the cellular thylakoid membrane. The catalysed reaction is reduced [plastocyanin] + hnu + oxidized [2Fe-2S]-[ferredoxin] = oxidized [plastocyanin] + reduced [2Fe-2S]-[ferredoxin]. PsaA and PsaB bind P700, the primary electron donor of photosystem I (PSI), as well as the electron acceptors A0, A1 and FX. PSI is a plastocyanin/cytochrome c6-ferredoxin oxidoreductase, converting photonic excitation into a charge separation, which transfers an electron from the donor P700 chlorophyll pair to the spectroscopically characterized acceptors A0, A1, FX, FA and FB in turn. Oxidized P700 is reduced on the lumenal side of the thylakoid membrane by plastocyanin or cytochrome c6. This is Photosystem I P700 chlorophyll a apoprotein A2 from Prochlorococcus marinus (strain MIT 9301).